A 259-amino-acid polypeptide reads, in one-letter code: Imidazole glycerol phosphate synthase subunit HisF (259 aa).

Residues D11 and D130 contribute to the active site.

It belongs to the HisA/HisF family. As to quaternary structure, heterodimer of HisH and HisF.

It localises to the cytoplasm. It catalyses the reaction 5-[(5-phospho-1-deoxy-D-ribulos-1-ylimino)methylamino]-1-(5-phospho-beta-D-ribosyl)imidazole-4-carboxamide + L-glutamine = D-erythro-1-(imidazol-4-yl)glycerol 3-phosphate + 5-amino-1-(5-phospho-beta-D-ribosyl)imidazole-4-carboxamide + L-glutamate + H(+). It functions in the pathway amino-acid biosynthesis; L-histidine biosynthesis; L-histidine from 5-phospho-alpha-D-ribose 1-diphosphate: step 5/9. Its function is as follows. IGPS catalyzes the conversion of PRFAR and glutamine to IGP, AICAR and glutamate. The HisF subunit catalyzes the cyclization activity that produces IGP and AICAR from PRFAR using the ammonia provided by the HisH subunit. The sequence is that of Imidazole glycerol phosphate synthase subunit HisF from Solidesulfovibrio magneticus (strain ATCC 700980 / DSM 13731 / RS-1) (Desulfovibrio magneticus).